The sequence spans 269 residues: Ribonuclease HII (269 aa).

Residues 79-269 (TYLAGADEVG…SFLKNILNTF (191 aa)) form the RNase H type-2 domain. Asp-85, Glu-86, and Asp-182 together coordinate a divalent metal cation.

Belongs to the RNase HII family. Mn(2+) serves as cofactor. Requires Mg(2+) as cofactor.

The protein resides in the cytoplasm. It catalyses the reaction Endonucleolytic cleavage to 5'-phosphomonoester.. In terms of biological role, endonuclease that specifically degrades the RNA of RNA-DNA hybrids. This chain is Ribonuclease HII, found in Clostridium novyi (strain NT).